Consider the following 415-residue polypeptide: Zona pellucida-like domain-containing protein 1 (415 aa).

Residues 1 to 19 (MEQIRLLLLLTIRVLSGSA) form the signal peptide. The Extracellular portion of the chain corresponds to 20-372 (QFNGYNCDAN…PPFQLNAITS (353 aa)). Residues 43-320 (YCGVQAITMK…PICSHRERRD (278 aa)) form the ZP domain. 2 cysteine pairs are disulfide-bonded: Cys44/Cys155 and Cys79/Cys104. N-linked (GlcNAc...) asparagine glycosylation is present at Asn164. Cystine bridges form between Cys235-Cys296 and Cys255-Cys313. The tract at residues 323–359 (RRTTWSSQSSSGSAVLSAGPIITRSDETPTNNSQLGS) is disordered. Over residues 328 to 339 (SSQSSSGSAVLS) the composition is skewed to low complexity. The span at 350–359 (TPTNNSQLGS) shows a compositional bias: polar residues. Residues 373–393 (ALISGMVILGVMSFSLLVCPL) form a helical membrane-spanning segment. At 394-415 (ALLHRKGPTSLVLNGIRNPVFD) the chain is on the cytoplasmic side.

In terms of processing, proteolytically cleaved before the transmembrane segment to yield the secreted form found in the extracellular matrix of the cupula.

The protein resides in the cytoplasmic vesicle membrane. It localises to the secreted. It is found in the extracellular space. The protein localises to the extracellular matrix. Glycoprotein which is a component of the gelatinous extracellular matrix in the cupulae of the vestibular organ. This Macaca fascicularis (Crab-eating macaque) protein is Zona pellucida-like domain-containing protein 1 (ZPLD1).